A 305-amino-acid polypeptide reads, in one-letter code: Coenzyme PQQ synthesis protein B (305 aa).

The protein belongs to the PqqB family.

Its pathway is cofactor biosynthesis; pyrroloquinoline quinone biosynthesis. In terms of biological role, may be involved in the transport of PQQ or its precursor to the periplasm. This Methylobacillus flagellatus (strain ATCC 51484 / DSM 6875 / VKM B-1610 / KT) protein is Coenzyme PQQ synthesis protein B.